A 408-amino-acid polypeptide reads, in one-letter code: Putative UPF0496 protein 2 (408 aa).

2 helical membrane-spanning segments follow: residues 224 to 244 (RIARGTAAAALVGACAAAIVA) and 252 to 272 (ALVGIGVAAAAFGATPAGAAR). The tract at residues 385–408 (MARGLPPPSPATVTTTSEERLTSS) is disordered.

It belongs to the UPF0496 family.

It localises to the membrane. This Oryza sativa subsp. indica (Rice) protein is Putative UPF0496 protein 2.